The following is a 305-amino-acid chain: Carbonic anhydrase 4 (305 aa).

The N-terminal stretch at 1–17 (MQLLLALLALAYVAPST) is a signal peptide. The Alpha-carbonic anhydrase domain occupies 20-278 (SGWCYEIQTK…LGKRQVFKSH (259 aa)). 2 disulfide bridges follow: Cys23-Cys35 and Cys45-Cys222. Catalysis depends on His87, which acts as the Proton donor/acceptor. Zn(2+)-binding residues include His114 and His116. Residue Asn123 is glycosylated (N-linked (GlcNAc...) asparagine). His139 provides a ligand contact to Zn(2+). N-linked (GlcNAc...) asparagine glycosylation is present at Asn214. Residue 218–219 (TT) coordinates substrate. Ser277 carries the GPI-anchor amidated serine lipid modification. The propeptide at 278 to 305 (HAPGQLLSLPLPTLLVPTLTCLVANFLQ) is removed in mature form.

It belongs to the alpha-carbonic anhydrase family. As to quaternary structure, interacts with SLC4A4. The cofactor is Zn(2+).

It localises to the cell membrane. The enzyme catalyses hydrogencarbonate + H(+) = CO2 + H2O. Its activity is regulated as follows. Inhibited by acetazolamide. Catalyzes the reversible hydration of carbon dioxide into bicarbonate and protons and thus is essential to maintaining intracellular and extracellular pH. May stimulate the sodium/bicarbonate transporter activity of SLC4A4 that acts in pH homeostasis. It is essential for acid overload removal from the retina and retina epithelium, and acid release in the choriocapillaris in the choroid. The polypeptide is Carbonic anhydrase 4 (Ca4) (Mus musculus (Mouse)).